We begin with the raw amino-acid sequence, 586 residues long: A-type ATP synthase subunit A (586 aa).

ATP is bound at residue 232–239 (GPFGSGKT).

This sequence belongs to the ATPase alpha/beta chains family. As to quaternary structure, has multiple subunits with at least A(3), B(3), C, D, E, F, H, I and proteolipid K(x).

The protein resides in the cell membrane. It carries out the reaction ATP + H2O + 4 H(+)(in) = ADP + phosphate + 5 H(+)(out). Component of the A-type ATP synthase that produces ATP from ADP in the presence of a proton gradient across the membrane. The A chain is the catalytic subunit. In Methanococcus maripaludis (strain C5 / ATCC BAA-1333), this protein is A-type ATP synthase subunit A.